The following is a 252-amino-acid chain: Probable endonuclease 4 (252 aa).

Residues His56, His96, Glu129, Asp162, His165, His191, Asp204, His206, and Glu233 each coordinate Zn(2+).

It belongs to the AP endonuclease 2 family. It depends on Zn(2+) as a cofactor.

The enzyme catalyses Endonucleolytic cleavage to 5'-phosphooligonucleotide end-products.. Its function is as follows. Endonuclease IV plays a role in DNA repair. It cleaves phosphodiester bonds at apurinic or apyrimidinic (AP) sites, generating a 3'-hydroxyl group and a 5'-terminal sugar phosphate. The sequence is that of Probable endonuclease 4 from Mycobacterium leprae (strain Br4923).